Reading from the N-terminus, the 364-residue chain is Cobalt-precorrin-5B C(1)-methyltransferase (364 aa).

The protein belongs to the CbiD family.

It catalyses the reaction Co-precorrin-5B + S-adenosyl-L-methionine = Co-precorrin-6A + S-adenosyl-L-homocysteine. It functions in the pathway cofactor biosynthesis; adenosylcobalamin biosynthesis; cob(II)yrinate a,c-diamide from sirohydrochlorin (anaerobic route): step 6/10. Functionally, catalyzes the methylation of C-1 in cobalt-precorrin-5B to form cobalt-precorrin-6A. The sequence is that of Cobalt-precorrin-5B C(1)-methyltransferase from Pseudomonas entomophila (strain L48).